Reading from the N-terminus, the 48-residue chain is ATP synthase protein 8 (48 aa).

The helical transmembrane segment at 13–35 (LTYGFTFILTILFLTSYVFLPMI) threads the bilayer.

The protein belongs to the ATPase protein 8 family. In terms of assembly, F-type ATPases have 2 components, CF(1) - the catalytic core - and CF(0) - the membrane proton channel. In yeast, the dimeric form of ATP synthase consists of 18 polypeptides: alpha, beta, gamma, delta, epsilon, 4 (B), 5 (OSCP), 6 (A), 8, 9 (C), d, E (Tim11), f, g, h, i, j and k.

The protein resides in the mitochondrion membrane. In terms of biological role, mitochondrial membrane ATP synthase (F(1)F(0) ATP synthase or Complex V) produces ATP from ADP in the presence of a proton gradient across the membrane which is generated by electron transport complexes of the respiratory chain. F-type ATPases consist of two structural domains, F(1) - containing the extramembraneous catalytic core and F(0) - containing the membrane proton channel, linked together by a central stalk and a peripheral stalk. During catalysis, ATP synthesis in the catalytic domain of F(1) is coupled via a rotary mechanism of the central stalk subunits to proton translocation. Part of the complex F(0) domain. Minor subunit located with subunit a in the membrane. The protein is ATP synthase protein 8 (ATP8) of Eremothecium gossypii (strain ATCC 10895 / CBS 109.51 / FGSC 9923 / NRRL Y-1056) (Yeast).